A 279-amino-acid chain; its full sequence is Expansin-A22 (279 aa).

Residues 1–27 (MKLLEKMIYVEFLMIIMVIWVVPMSYG) form the signal peptide. The Expansin-like EG45 domain occupies 76-186 (QGACGYGNLF…RRIPCSKTGG (111 aa)). One can recognise an Expansin-like CBD domain in the interval 196 to 275 (YFLMVLIYNV…NWGFGQTFDG (80 aa)).

Belongs to the expansin family. Expansin A subfamily.

It localises to the secreted. Its subcellular location is the cell wall. The protein resides in the membrane. Functionally, causes loosening and extension of plant cell walls by disrupting non-covalent bonding between cellulose microfibrils and matrix glucans. No enzymatic activity has been found. This Arabidopsis thaliana (Mouse-ear cress) protein is Expansin-A22 (EXPA22).